Consider the following 164-residue polypeptide: Peptide methionine sulfoxide reductase MsrA (164 aa).

The active site involves C16.

It belongs to the MsrA Met sulfoxide reductase family.

The enzyme catalyses L-methionyl-[protein] + [thioredoxin]-disulfide + H2O = L-methionyl-(S)-S-oxide-[protein] + [thioredoxin]-dithiol. The catalysed reaction is [thioredoxin]-disulfide + L-methionine + H2O = L-methionine (S)-S-oxide + [thioredoxin]-dithiol. In terms of biological role, has an important function as a repair enzyme for proteins that have been inactivated by oxidation. Catalyzes the reversible oxidation-reduction of methionine sulfoxide in proteins to methionine. This is Peptide methionine sulfoxide reductase MsrA from Methanoculleus marisnigri (strain ATCC 35101 / DSM 1498 / JR1).